The sequence spans 331 residues: N-arachidonyl glycine receptor (331 aa).

Over M1 to L26 the chain is Extracellular. The N-linked (GlcNAc...) asparagine glycan is linked to N14. Residues V27–F47 form a helical membrane-spanning segment. Residues S48–T56 lie on the Cytoplasmic side of the membrane. A helical membrane pass occupies residues V57–F77. Topologically, residues R78 to H95 are extracellular. The cysteines at positions 94 and 172 are disulfide-linked. The helical transmembrane segment at I96–S116 threads the bilayer. The Cytoplasmic segment spans residues A117 to A138. The chain crosses the membrane as a helical span at residues V139–L159. Residues Y160 to R191 are Extracellular-facing. The N-linked (GlcNAc...) asparagine glycan is linked to N188. A helical membrane pass occupies residues L192–H212. Residues S213 to T236 lie on the Cytoplasmic side of the membrane. Residues L237 to L257 form a helical membrane-spanning segment. The Extracellular portion of the chain corresponds to Q258–G268. Residues A269–V289 traverse the membrane as a helical segment. Residues S290–L331 lie on the Cytoplasmic side of the membrane. S322 is modified (phosphoserine).

It belongs to the G-protein coupled receptor 1 family. Expressed in the eye including cornea, retina, iris and ciliary epithelium (at protein level). Expressed in spleen, liver and lymphocytes with highest expression levels in intestinal intraepithelial lymphocytes.

Its subcellular location is the cell membrane. It localises to the cytoplasmic vesicle membrane. Its function is as follows. G protein-coupled receptor (GPCR) that plays a role in diverse physiological processes particularly within the immune and nervous systems. Becomes active when triggered by various endogenous ligands including endocannabinoid N-arachidonyl glycine (NAGly), delta-9-tetrahydrocannabinol or resolvin D2/RvD2 derived from the omega-3 fatty acid docosahexaenoic acid (DHA). Upon RvD2 binding, facilitates the resolution of inflammation, aiding in tissue repair and homeostasis. Mechanistically, RvD2 ligation initiates Galphas protein coupling, activation of cAMP-PKA signaling pathway and phosphorylation of STAT3, leading to RvD2-stimulated macrophage phagocytosis. Mediates NAGly-induced process of reorganization of actin filaments and induction of acrosomal exocytosis. Activation by N-arachidonoyl glycine (NAGly) can also induce apoptosis in macrophages. Plays a role in homeostasis of CD8+ subsets of intraepithelial lymphocytes (IELs) (CD8alphaalpha and CD8alphabeta IELs) in small intestine by supporting preferential migration of CD8alphaalpha T-cells to intraepithelial compartment over lamina propria compartment, and by mediating their reconstitution into small intestine after bone marrow transplant. Also participates in hypotensive responses, mediating reduction in intraocular and blood pressure. This is N-arachidonyl glycine receptor from Mus musculus (Mouse).